A 322-amino-acid chain; its full sequence is CXXC-type zinc finger protein 5 (322 aa).

A compositionally biased stretch (gly residues) spans 1–10 (MSSLGGGSQD). Positions 1 to 100 (MSSLGGGSQD…SGGGSMMGGE (100 aa)) are disordered. Low complexity-rich tracts occupy residues 11–20 (AGGSSSSSTN) and 28–52 (SGPK…VADD). Thr-53 carries the post-translational modification Phosphothreonine. Over residues 87–97 (SSGGSGGGSMM) the composition is skewed to gly residues. The segment at 256-297 (GKKKRKRCGMCAPCRRRINCEQCSSCRNRKTGHQICKFRKCE) adopts a CXXC-type zinc-finger fold. The Nuclear localization signal motif lies at 257-262 (KKKRKR). Cys-263, Cys-266, Cys-269, Cys-275, Cys-278, Cys-281, Cys-291, and Cys-296 together coordinate Zn(2+).

Interacts with DVL1. Interacts with RBPJ.

The protein localises to the nucleus. It is found in the cytoplasm. Its function is as follows. May indirectly participate in activation of the NF-kappa-B and MAPK pathways. Acts as a mediator of BMP4-mediated modulation of canonical Wnt signaling activity in neural stem cells. Required for DNA damage-induced ATM phosphorylation, p53 activation and cell cycle arrest. Involved in myelopoiesis. Binds to the oxygen responsive element of COX4I2 and represses its transcription under hypoxia conditions (4% oxygen), as well as normoxia conditions (20% oxygen). May repress COX4I2 transactivation induced by CHCHD2 and RBPJ. Binds preferentially to DNA containing cytidine-phosphate-guanosine (CpG) dinucleotides over CpH (H=A, T, and C), hemimethylated-CpG and hemimethylated-hydroxymethyl-CpG. The protein is CXXC-type zinc finger protein 5 (CXXC5) of Pongo abelii (Sumatran orangutan).